Here is a 137-residue protein sequence, read N- to C-terminus: Large ribosomal subunit protein uL24 (137 aa).

It belongs to the universal ribosomal protein uL24 family. In terms of assembly, part of the 50S ribosomal subunit.

Its function is as follows. One of two assembly initiator proteins, it binds directly to the 5'-end of the 23S rRNA, where it nucleates assembly of the 50S subunit. Located at the polypeptide exit tunnel on the outside of the subunit. This chain is Large ribosomal subunit protein uL24, found in Sulfurisphaera tokodaii (strain DSM 16993 / JCM 10545 / NBRC 100140 / 7) (Sulfolobus tokodaii).